The sequence spans 206 residues: Large ribosomal subunit protein uL4 (206 aa).

A disordered region spans residues 63-97 (MYKQKGTGRARHHSARAPQFRGGGKAHGPVVRSHE). Over residues 64 to 77 (YKQKGTGRARHHSA) the composition is skewed to basic residues.

The protein belongs to the universal ribosomal protein uL4 family. In terms of assembly, part of the 50S ribosomal subunit.

Its function is as follows. One of the primary rRNA binding proteins, this protein initially binds near the 5'-end of the 23S rRNA. It is important during the early stages of 50S assembly. It makes multiple contacts with different domains of the 23S rRNA in the assembled 50S subunit and ribosome. Functionally, forms part of the polypeptide exit tunnel. This is Large ribosomal subunit protein uL4 from Rhizobium rhizogenes (strain K84 / ATCC BAA-868) (Agrobacterium radiobacter).